An 848-amino-acid polypeptide reads, in one-letter code: Adenylate cyclase (848 aa).

The interval 1 to 535 (MYLYIETLKQ…DVSHHFPLRL (535 aa)) is catalytic. Residues 541-848 (KALYSPCEIR…DAPLLQQYFS (308 aa)) form a regulatory region. His609 carries the post-translational modification Phosphohistidine; by CRR.

Belongs to the adenylyl cyclase class-1 family.

The protein localises to the cytoplasm. The catalysed reaction is ATP = 3',5'-cyclic AMP + diphosphate. In Escherichia coli O6:H1 (strain CFT073 / ATCC 700928 / UPEC), this protein is Adenylate cyclase (cyaA).